The chain runs to 43 residues: Protein PsbN (43 aa).

Residues 5-27 (ALVAISISRLLVSFTGYALYTAF) traverse the membrane as a helical segment.

The protein belongs to the PsbN family.

The protein localises to the plastid. It is found in the chloroplast thylakoid membrane. In terms of biological role, may play a role in photosystem I and II biogenesis. The chain is Protein PsbN from Bowenia serrulata (Byfield fern).